The chain runs to 882 residues: Valine--tRNA ligase (882 aa).

The 'HIGH' region motif lies at 45–55; sequence PNVTGKLHLGH. Positions 519-523 match the 'KMSKS' region motif; sequence KMSKS. Lys522 serves as a coordination point for ATP. Residues 808 to 882 are a coiled coil; that stretch reads LADLLNVEEE…RIAEMKKIKS (75 aa).

The protein belongs to the class-I aminoacyl-tRNA synthetase family. ValS type 1 subfamily. Monomer.

Its subcellular location is the cytoplasm. It catalyses the reaction tRNA(Val) + L-valine + ATP = L-valyl-tRNA(Val) + AMP + diphosphate. Functionally, catalyzes the attachment of valine to tRNA(Val). As ValRS can inadvertently accommodate and process structurally similar amino acids such as threonine, to avoid such errors, it has a 'posttransfer' editing activity that hydrolyzes mischarged Thr-tRNA(Val) in a tRNA-dependent manner. This chain is Valine--tRNA ligase, found in Streptococcus pyogenes serotype M1.